Reading from the N-terminus, the 198-residue chain is MYYAEPIARLIEELTKLPGIGPKTAQRLAFHILHMEPSVVEGIARTLVEARAKVKYCSVCCNLTDQDPCQICADDGRDHSTICVVQEPRDVVAMEKTREYHGVYHVLHGALNPMEGIGIDDIRVKELVARLGDGRVQEVILCTNPNTEGETTAMYIARYIKPLGVKVTRIARGLPMGGDLEYADEVTLAKALEGRREI.

The segment at 57–72 adopts a C4-type zinc-finger fold; that stretch reads CSVCCNLTDQDPCQIC. The Toprim domain maps to 80–175; the sequence is STICVVQEPR…KVTRIARGLP (96 aa).

The protein belongs to the RecR family.

Its function is as follows. May play a role in DNA repair. It seems to be involved in an RecBC-independent recombinational process of DNA repair. It may act with RecF and RecO. In Symbiobacterium thermophilum (strain DSM 24528 / JCM 14929 / IAM 14863 / T), this protein is Recombination protein RecR.